The chain runs to 427 residues: MAAVSPPTRCQALVTFEDVAVTFTDDEWKRLVPVQRALYKAVMLENYESIISLGLPVPRPDVILQFKRRGEPWIRGFHGSEEKTWPESVSLDLETKPETLDASRGTLREIHRKQSSLCPKREIQTLTGGPEPEKESPKARTCKKPLSLDKGLHQMSAPSKKALTKHQDQECSECGKTFFDHSSLIRHQRTHTGEKPYDCPECGKAFSHRSSLSRHLMFHTGESPYECDACGKAFFDRSSLTVHQRIHTGEKPFKCNDCGKAFFDRSSLTRHQRIHTGESPYECQQCGKAFSQKSILTRHLLTHTGRKPYECRDCGKAFYGVTSLNRHQKVHTEEPRYQCSECGKAFFDRSSLTQHQKIHTGDKPYECGECGKAFSQRCRLTRHQRVHTGEKPFECSVCGKEFSSKSSIIQHQRRYAKQGIDRGGSMS.

The KRAB domain occupies 14–85 (VTFEDVAVTF…GFHGSEEKTW (72 aa)). The interval 111–142 (HRKQSSLCPKREIQTLTGGPEPEKESPKARTC) is disordered. 8 consecutive C2H2-type zinc fingers follow at residues 169 to 191 (QECS…QRTH), 197 to 219 (YDCP…LMFH), 225 to 247 (YECD…QRIH), 253 to 275 (FKCN…QRIH), 281 to 303 (YECQ…LLTH), 309 to 331 (YECR…QKVH), 337 to 359 (YQCS…QKIH), and 365 to 387 (YECG…QRVH). A C2H2-type 9; degenerate zinc finger spans residues 393–415 (FECSVCGKEFSSKSSIIQHQRRY).

Belongs to the krueppel C2H2-type zinc-finger protein family.

Its subcellular location is the nucleus. Functionally, may be involved in transcriptional regulation. The protein is Zinc finger protein 2 of Mus musculus (Mouse).